Here is a 196-residue protein sequence, read N- to C-terminus: Serine/arginine-rich splicing factor RSZ22A (196 aa).

Positions 2–71 (SRVYVGNLDP…NGWRVEQSHN (70 aa)) constitute an RRM domain. The residue at position 48 (S48) is a Phosphoserine. Residues 58-70 (VDGKNGWRVEQSH) show a composition bias toward basic and acidic residues. A disordered region spans residues 58–196 (VDGKNGWRVE…GLKDVRRSRS (139 aa)). The span at 72-87 (RGGGGGRGGGRGGGDG) shows a compositional bias: gly residues. Residues 88-100 (GRGRGGSDLKCYE) are compositionally biased toward basic and acidic residues. Residues 96 to 113 (LKCYECGESGHFARECRS) form a CCHC-type zinc finger. The segment covering 119 to 135 (GRRRSRSRSRSPPRYRK) has biased composition (basic residues). 7 positions are modified to phosphoserine: S136, S144, S146, S151, S159, S170, and S196. Residues 139-149 (YGGRRSYSPRA) are compositionally biased toward low complexity.

This sequence belongs to the splicing factor SR family. RSZ subfamily. Component of the spliceosome. Extensively phosphorylated on serine residues in the RS domain.

It is found in the nucleus. Functionally, probably involved in intron recognition and spliceosome assembly. This chain is Serine/arginine-rich splicing factor RSZ22A (RSZ22A), found in Arabidopsis thaliana (Mouse-ear cress).